Consider the following 164-residue polypeptide: MSDKIGLFTGSFDPMTKGHVDLIERASRLFDKLYVGIFYNREKSGFFTIEARERIVKEALQHLRNVEVITSQNELAVTVARRLGTQAFVRGLRNSQDLDYEANMNFFNQELAGEMETIFLLSKPVYQHISSSRIRELIAFQQDIAAYVPQSVIKELERINDEKN.

Ser-11 provides a ligand contact to substrate. Residues 11–12 (SF) and His-19 each bind ATP. Lys-43, Ala-76, and Arg-90 together coordinate substrate. ATP is bound by residues 91 to 93 (GLR), Glu-101, and 126 to 132 (YQHISSS).

The protein belongs to the bacterial CoaD family. As to quaternary structure, homohexamer. Requires Mg(2+) as cofactor.

It is found in the cytoplasm. The enzyme catalyses (R)-4'-phosphopantetheine + ATP + H(+) = 3'-dephospho-CoA + diphosphate. It participates in cofactor biosynthesis; coenzyme A biosynthesis; CoA from (R)-pantothenate: step 4/5. In terms of biological role, reversibly transfers an adenylyl group from ATP to 4'-phosphopantetheine, yielding dephospho-CoA (dPCoA) and pyrophosphate. The protein is Phosphopantetheine adenylyltransferase of Streptococcus sanguinis (strain SK36).